Reading from the N-terminus, the 471-residue chain is Argininosuccinate lyase (471 aa).

Belongs to the lyase 1 family. Argininosuccinate lyase subfamily.

It is found in the cytoplasm. The enzyme catalyses 2-(N(omega)-L-arginino)succinate = fumarate + L-arginine. The protein operates within amino-acid biosynthesis; L-arginine biosynthesis; L-arginine from L-ornithine and carbamoyl phosphate: step 3/3. The polypeptide is Argininosuccinate lyase (Deinococcus radiodurans (strain ATCC 13939 / DSM 20539 / JCM 16871 / CCUG 27074 / LMG 4051 / NBRC 15346 / NCIMB 9279 / VKM B-1422 / R1)).